A 305-amino-acid polypeptide reads, in one-letter code: Acyl transferase (305 aa).

Active-site charge relay system residues include serine 116, aspartate 213, and histidine 243.

The protein belongs to the LuxD family.

It functions in the pathway lipid metabolism; fatty acid reduction for biolumincescence. In terms of biological role, acyl transferase is part of the fatty acid reductase system required for aldehyde biosynthesis; it produces fatty acids for the luminescent reaction. This Photobacterium leiognathi protein is Acyl transferase.